We begin with the raw amino-acid sequence, 269 residues long: Exodeoxyribonuclease WalJ (269 aa).

A divalent metal cation contacts are provided by His61, His63, Asp65, His66, and Asp150.

This sequence belongs to the metallo-beta-lactamase superfamily. Fe(2+) is required as a cofactor. Zn(2+) serves as cofactor. Requires Mn(2+) as cofactor.

The protein resides in the cell membrane. Functionally, 5'-&gt;3' double-stranded DNA exonuclease. May be involved in the WalK/WalR signal transduction pathway. Required for accurate coordination of cell division with DNA replication. May play a role in cell wall metabolism. This chain is Exodeoxyribonuclease WalJ, found in Streptococcus pneumoniae serotype 2 (strain D39 / NCTC 7466).